The chain runs to 201 residues: MAFSTLKSDRERGFLDGHFLIAMPGMADGNFTRSVVYVCAHTTAGAMGFIINRTQPVKFADILLHLDLIDQNDAIMLPDHARNFPIQCGGPVETGRGFVLHSDDYLSDSSIPVSDDISLTATLDIVRAISDGRGPARATMLLGYAGWGPGQLEAEIANNGWLNCPASEDLIFDPVLDNKYDRALALIGISPATLSAEAGHA.

The protein belongs to the UPF0301 (AlgH) family.

This chain is UPF0301 protein Avi_1069, found in Allorhizobium ampelinum (strain ATCC BAA-846 / DSM 112012 / S4) (Agrobacterium vitis (strain S4)).